The sequence spans 411 residues: uncharacterized protein (411 aa).

Residues Met-1 to Cys-21 form the signal peptide. The EGF-like domain occupies Pro-28 to Gln-67. Intrachain disulfides connect Cys-32–Cys-42, Cys-36–Cys-54, and Cys-56–Cys-66. The segment covering Thr-78 to Ala-97 has biased composition (polar residues). Disordered regions lie at residues Thr-78–Arg-312 and His-337–Met-375. Over residues Asp-100 to Thr-230 the composition is skewed to basic and acidic residues. Over residues Phe-237–Glu-266 the composition is skewed to acidic residues. A compositionally biased stretch (low complexity) spans Asp-267–Thr-276.

This is an uncharacterized protein from Caenorhabditis elegans.